We begin with the raw amino-acid sequence, 115 residues long: Large ribosomal subunit protein uL24 (115 aa).

It belongs to the universal ribosomal protein uL24 family. Part of the 50S ribosomal subunit.

Its function is as follows. One of two assembly initiator proteins, it binds directly to the 5'-end of the 23S rRNA, where it nucleates assembly of the 50S subunit. One of the proteins that surrounds the polypeptide exit tunnel on the outside of the subunit. This chain is Large ribosomal subunit protein uL24, found in Deinococcus deserti (strain DSM 17065 / CIP 109153 / LMG 22923 / VCD115).